A 165-amino-acid chain; its full sequence is MFRSTFFGLSRAIVQPATPLTVRAAFQSRFYSAAAAASQPTTTATTTTPLQQQQQQQPTTQPTTPIQTQTGAAPTESTKPVAKPYLVGRAWTQRLPVYHLAKRGGNKKLTQIKKVQGDGQALRRDLAQFLGLEVKEVRVKVPTGHLEVDGHRREEIVKFLDGLGF.

Positions 42–75 are enriched in low complexity; the sequence is TTATTTTPLQQQQQQQPTTQPTTPIQTQTGAAPT. The disordered stretch occupies residues 42-81; it reads TTATTTTPLQQQQQQQPTTQPTTPIQTQTGAAPTESTKPV.

Belongs to the mitochondrion-specific ribosomal protein mL49 family. Component of the mitochondrial large ribosomal subunit (mt-LSU). Mature N.crassa 74S mitochondrial ribosomes consist of a small (37S) and a large (54S) subunit. The 37S small subunit contains a 16S ribosomal RNA (16S mt-rRNA) and 32 different proteins. The 54S large subunit contains a 23S rRNA (23S mt-rRNA) and 42 different proteins.

The protein resides in the mitochondrion. Its function is as follows. Component of the mitochondrial ribosome (mitoribosome), a dedicated translation machinery responsible for the synthesis of mitochondrial genome-encoded proteins, including at least some of the essential transmembrane subunits of the mitochondrial respiratory chain. The mitoribosomes are attached to the mitochondrial inner membrane and translation products are cotranslationally integrated into the membrane. The chain is Large ribosomal subunit protein mL49 (img2) from Neurospora crassa (strain ATCC 24698 / 74-OR23-1A / CBS 708.71 / DSM 1257 / FGSC 987).